The sequence spans 286 residues: Transcriptional regulator of yeast form adherence 4 (286 aa).

2 stretches are compositionally biased toward low complexity: residues Met1 to Ser29 and Leu37 to Asn65. A disordered region spans residues Met1–Pro71. C2H2-type zinc fingers lie at residues Phe78–His101 and Phe107–His130. Residues His146–His260 are disordered. Composition is skewed to low complexity over residues Gly156–Asn165 and Ser228–Thr244. Residues Asn245–His260 are compositionally biased toward polar residues.

It is found in the nucleus. Functionally, transcription factor required for yeast cell adherence to silicone substrate. The polypeptide is Transcriptional regulator of yeast form adherence 4 (TRY4) (Candida albicans (strain SC5314 / ATCC MYA-2876) (Yeast)).